The primary structure comprises 472 residues: Eukaryotic translation initiation factor 2 subunit 3, Y-linked (472 aa).

Ala-2 is subject to N-acetylalanine. Position 16 is a phosphoserine (Ser-16). Residues 39-247 form the tr-type G domain; it reads QATINIGTIG…YIVKKIPVPL (209 aa). The G1 stretch occupies residues 48–55; it reads GHVAHGKS. 51 to 56 serves as a coordination point for GTP; the sequence is AHGKST. Residues 76-80 form a G2 region; sequence NITIK. The interval 134–137 is G3; the sequence is DCPG. Residues 190–193 and 225–227 contribute to the GTP site; these read NKID and SAQ. Positions 190-193 are G4; it reads NKID. The G5 stretch occupies residues 225-227; that stretch reads SAQ.

Belongs to the TRAFAC class translation factor GTPase superfamily. Classic translation factor GTPase family. EIF2G subfamily. EIF2 is a heterotrimer composed of an alpha (EIF2S1), a beta (EIF2S2) and a gamma (Eif2s3x and Eif2s3y) chain. eIF2 is member of the 43S pre-initiation complex (43S PIC). As to expression, widely expressed in males.

It catalyses the reaction GTP + H2O = GDP + phosphate + H(+). In terms of biological role, member of the eIF2 complex that functions in the early steps of protein synthesis by forming a ternary complex with GTP and initiator tRNA. This complex binds to a 40S ribosomal subunit, followed by mRNA binding to form the 43S pre-initiation complex (43S PIC). Junction of the 60S ribosomal subunit to form the 80S initiation complex is preceded by hydrolysis of the GTP bound to eIF2 and release of an eIF2-GDP binary complex. In order for eIF2 to recycle and catalyze another round of initiation, the GDP bound to eIF2 must exchange with GTP by way of a reaction catalyzed by eIF-2B. Along with its paralog on chromosome X, may contribute to spermatogenesis up to the round spermatid stage. The sequence is that of Eukaryotic translation initiation factor 2 subunit 3, Y-linked (Eif2s3y) from Rattus norvegicus (Rat).